The primary structure comprises 331 residues: Leucine-rich repeat-containing protein 26 (331 aa).

An N-terminal signal peptide occupies residues 1–26 (MRGSFFSRLPPQLSLLLLLSLRRVWT). Residues 27 to 261 (QEDIGTAPSK…QCTQSLAARD (235 aa)) lie on the Extracellular side of the membrane. The LRRNT domain maps to 34–71 (PSKSPVAPECPEACSCSLGGKANCSALALPAVPADLSW). Intrachain disulfides connect Cys-43-Cys-49 and Cys-47-Cys-57. LRR repeat units lie at residues 72-93 (QVRSLLLDHNRVSALPPGAFAN), 96-117 (ALLYLDLRENRLRSVHARAFWG), 120-141 (VLQWLDLSSNQLETLPPGTFAP), 144-165 (ALSFLSLAGNRLALLEPSILGP), and 168-191 (LLRVLSLQDNSLSAIEAGLLNNLP). Residues 201–255 (NPWTCNCALRPLCTWLRKHPRPASETETLLCVSPRLQTLSLLTAFPDAAFKQCTQ) form the LRRCT domain. 2 disulfide bridges follow: Cys-205–Cys-231 and Cys-207–Cys-253. Residues 262 to 282 (LAVVYALGPVSFLASLAICLA) form a helical membrane-spanning segment. Residues 283–331 (LGSVLTACGARRRRRRRTTVRHLLRRQLDPEGPPSLEDAGSPVTAAIQA) are Cytoplasmic-facing. Positions 310-331 (LDPEGPPSLEDAGSPVTAAIQA) are disordered.

Interacts with KCNMA1.

The protein resides in the cell membrane. The protein localises to the cytoplasm. Its subcellular location is the cytoskeleton. Auxiliary protein of the large-conductance, voltage and calcium-activated potassium channel (BK alpha). Required for the conversion of BK alpha channels from a high-voltage to a low-voltage activated channel type in non-excitable cells. These are characterized by negative membrane voltages and constant low levels of calcium. In Mus musculus (Mouse), this protein is Leucine-rich repeat-containing protein 26 (Lrrc26).